A 606-amino-acid chain; its full sequence is Adenine deaminase (606 aa).

It belongs to the metallo-dependent hydrolases superfamily. Adenine deaminase family. Requires Mn(2+) as cofactor.

It carries out the reaction adenine + H2O + H(+) = hypoxanthine + NH4(+). The polypeptide is Adenine deaminase (Rubrobacter xylanophilus (strain DSM 9941 / JCM 11954 / NBRC 16129 / PRD-1)).